Consider the following 83-residue polypeptide: Hainantoxin-III (83 aa).

An N-terminal signal peptide occupies residues 1–21; it reads MKASMFLALAGLVLLFVVGYA. The propeptide occupies 22–48; it reads SESEEKEFPRELLSKIFALDDFKGEER. 3 disulfides stabilise this stretch: cysteine 50–cysteine 65, cysteine 57–cysteine 70, and cysteine 64–cysteine 77. Leucine 81 is modified (leucine amide).

Belongs to the neurotoxin 10 (Hwtx-1) family. 15 (Hntx-3) subfamily. As to quaternary structure, monomer. As to expression, expressed by the venom gland.

The protein resides in the secreted. Its function is as follows. Selective antagonist of neuronal tetrodotoxin (TTX)-sensitive voltage-gated sodium channels (IC(50)=1270 nM on Nav1.1/SCN1A, 270 nM on Nav1.2/SCN2A, 491 nM on Nav1.3/SCN3A and 232 nM on Nav1.7/SCN9A). This toxin suppress Nav1.7 current amplitude without significantly altering the activation, inactivation, and repriming kinetics. Short extreme depolarizations partially activate the toxin-bound channel, indicating voltage-dependent inhibition of this toxin. This toxin increases the deactivation of the Nav1.7 current after extreme depolarizations. The toxin-Nav1.7 complex is gradually dissociated upon prolonged strong depolarizations in a voltage-dependent manner, and the unbound toxin rebinds to Nav1.7 after a long repolarization. Moreover, analysis of chimeric channels showed that the DIIS3-S4 linker is critical for toxin binding to Nav1.7. These data are consistent with this toxin interacting with Nav1.7 site 4 and trapping the domain II voltage sensor in the closed state. This chain is Hainantoxin-III, found in Cyriopagopus hainanus (Chinese bird spider).